The chain runs to 444 residues: Probable glycine dehydrogenase (decarboxylating) subunit 1 (444 aa).

It belongs to the GcvP family. N-terminal subunit subfamily. The glycine cleavage system is composed of four proteins: P, T, L and H. In this organism, the P 'protein' is a heterodimer of two subunits.

It carries out the reaction N(6)-[(R)-lipoyl]-L-lysyl-[glycine-cleavage complex H protein] + glycine + H(+) = N(6)-[(R)-S(8)-aminomethyldihydrolipoyl]-L-lysyl-[glycine-cleavage complex H protein] + CO2. The glycine cleavage system catalyzes the degradation of glycine. The P protein binds the alpha-amino group of glycine through its pyridoxal phosphate cofactor; CO(2) is released and the remaining methylamine moiety is then transferred to the lipoamide cofactor of the H protein. This chain is Probable glycine dehydrogenase (decarboxylating) subunit 1, found in Carboxydothermus hydrogenoformans (strain ATCC BAA-161 / DSM 6008 / Z-2901).